The primary structure comprises 288 residues: MDAAVTDDFQQILPIEQLRSTHASNDYVERPPAPCKQALSSPSLIVQTHKSDWSLATMPTSLPRSLSQCHQLQPLPQHLSQSSIASSMSHSTTASDQRLLASITPSPSGQSIIRTQPGAGVHPKADGALKGEAEQSAGHPSEHLFICEECGRCKCVPCTAARPLPSCWLCNQRCLCSAESLLDYGTCLCCVKGLFYHCSTDDEDNCADEPCSCGPSSCFVRWAAMSLISLFLPCLCCYLPTRGCLHLCQQGYDSLRRPGCRCKRHTNTVCRKISSGSAPFPKAQEKSV.

The region spanning 154–260 is the SPR domain; the sequence is KCVPCTAARP…GYDSLRRPGC (107 aa).

This sequence belongs to the sprouty family. Interacts with TESK1. Interacts with USP11. Interacts with CAV1 (via C-terminus). Widely expressed; particularly in the fetal tissues. Expressed in the brain with expression the highest in Purkinje cells in the cerebellum (at protein level). Expressed in the myocardium of the heart.

Its subcellular location is the cytoplasm. Functionally, inhibits neurite branching, arbor length and neurite complexity. Inhibits EGF-mediated p42/44 ERK signaling. Negatively regulates the MAPK cascade, resulting in a reduction of extracellular matrix protein accumulation. May function as an antagonist of fibroblast growth factor (FGF) pathways and may negatively modulate respiratory organogenesis. This chain is Protein sprouty homolog 3, found in Homo sapiens (Human).